A 213-amino-acid polypeptide reads, in one-letter code: Outer-membrane lipoprotein carrier protein (213 aa).

A signal peptide spans 1 to 23; that stretch reads MKKLLKQSLLGFALVSMTGAAFA.

Belongs to the LolA family. As to quaternary structure, monomer.

The protein localises to the periplasm. Its function is as follows. Participates in the translocation of lipoproteins from the inner membrane to the outer membrane. Only forms a complex with a lipoprotein if the residue after the N-terminal Cys is not an aspartate (The Asp acts as a targeting signal to indicate that the lipoprotein should stay in the inner membrane). This is Outer-membrane lipoprotein carrier protein from Actinobacillus pleuropneumoniae serotype 7 (strain AP76).